The chain runs to 115 residues: Nucleoid-associated protein P9211_00201 (115 aa).

It belongs to the YbaB/EbfC family. As to quaternary structure, homodimer.

The protein localises to the cytoplasm. It is found in the nucleoid. Binds to DNA and alters its conformation. May be involved in regulation of gene expression, nucleoid organization and DNA protection. The chain is Nucleoid-associated protein P9211_00201 from Prochlorococcus marinus (strain MIT 9211).